The sequence spans 66 residues: Large ribosomal subunit protein bL33c (66 aa).

This sequence belongs to the bacterial ribosomal protein bL33 family.

It localises to the plastid. The protein localises to the chloroplast. This chain is Large ribosomal subunit protein bL33c, found in Aethionema cordifolium (Lebanon stonecress).